The sequence spans 60 residues: Large ribosomal subunit protein bL32 (60 aa).

Over residues 1–16 the composition is skewed to basic residues; the sequence is MAVPKRKTTPSKRGMR. Residues 1 to 34 form a disordered region; the sequence is MAVPKRKTTPSKRGMRRAHDALSSPVYIEDKDSG.

It belongs to the bacterial ribosomal protein bL32 family.

This Maricaulis maris (strain MCS10) (Caulobacter maris) protein is Large ribosomal subunit protein bL32.